The chain runs to 280 residues: Bifunctional protein FolD (280 aa).

NADP(+)-binding positions include 161 to 163 (GRS), Ser-186, and Ile-227.

This sequence belongs to the tetrahydrofolate dehydrogenase/cyclohydrolase family. Homodimer.

It carries out the reaction (6R)-5,10-methylene-5,6,7,8-tetrahydrofolate + NADP(+) = (6R)-5,10-methenyltetrahydrofolate + NADPH. The enzyme catalyses (6R)-5,10-methenyltetrahydrofolate + H2O = (6R)-10-formyltetrahydrofolate + H(+). It participates in one-carbon metabolism; tetrahydrofolate interconversion. In terms of biological role, catalyzes the oxidation of 5,10-methylenetetrahydrofolate to 5,10-methenyltetrahydrofolate and then the hydrolysis of 5,10-methenyltetrahydrofolate to 10-formyltetrahydrofolate. This Caldanaerobacter subterraneus subsp. tengcongensis (strain DSM 15242 / JCM 11007 / NBRC 100824 / MB4) (Thermoanaerobacter tengcongensis) protein is Bifunctional protein FolD.